The sequence spans 168 residues: 6,7-dimethyl-8-ribityllumazine synthase (168 aa).

Residues tryptophan 31, 65–67 (SFE), and 90–92 (NVI) contribute to the 5-amino-6-(D-ribitylamino)uracil site. Position 95–96 (95–96 (ET)) interacts with (2S)-2-hydroxy-3-oxobutyl phosphate. The active-site Proton donor is the histidine 98. 5-amino-6-(D-ribitylamino)uracil is bound at residue phenylalanine 123. Arginine 137 lines the (2S)-2-hydroxy-3-oxobutyl phosphate pocket.

It belongs to the DMRL synthase family.

It catalyses the reaction (2S)-2-hydroxy-3-oxobutyl phosphate + 5-amino-6-(D-ribitylamino)uracil = 6,7-dimethyl-8-(1-D-ribityl)lumazine + phosphate + 2 H2O + H(+). Its pathway is cofactor biosynthesis; riboflavin biosynthesis; riboflavin from 2-hydroxy-3-oxobutyl phosphate and 5-amino-6-(D-ribitylamino)uracil: step 1/2. Its function is as follows. Catalyzes the formation of 6,7-dimethyl-8-ribityllumazine by condensation of 5-amino-6-(D-ribitylamino)uracil with 3,4-dihydroxy-2-butanone 4-phosphate. This is the penultimate step in the biosynthesis of riboflavin. The sequence is that of 6,7-dimethyl-8-ribityllumazine synthase from Christiangramia forsetii (strain DSM 17595 / CGMCC 1.15422 / KT0803) (Gramella forsetii).